The primary structure comprises 114 residues: Cytokine SCM-1 beta (114 aa).

The signal sequence occupies residues 1-21 (MRLLILALLGICSLTAYIVEG). Cysteine 32 and cysteine 69 form a disulfide bridge. The segment at 91 to 114 (RNNMIQTKPTGTQQSTNTAVTLTG) is disordered.

This sequence belongs to the intercrine gamma family.

The protein localises to the secreted. Its function is as follows. Chemotactic activity for lymphocytes but not for monocytes or neutrophils. In Homo sapiens (Human), this protein is Cytokine SCM-1 beta (XCL2).